Here is a 131-residue protein sequence, read N- to C-terminus: Small ribosomal subunit protein uS8 (131 aa).

The protein belongs to the universal ribosomal protein uS8 family. As to quaternary structure, part of the 30S ribosomal subunit. Contacts proteins S5 and S12.

Its function is as follows. One of the primary rRNA binding proteins, it binds directly to 16S rRNA central domain where it helps coordinate assembly of the platform of the 30S subunit. The sequence is that of Small ribosomal subunit protein uS8 from Azobacteroides pseudotrichonymphae genomovar. CFP2.